A 372-amino-acid chain; its full sequence is NAD(P)H-quinone oxidoreductase subunit 1 (372 aa).

The next 8 membrane-spanning stretches (helical) occupy residues I27–V47, I97–V117, V128–M148, L176–V196, I204–L224, I266–V286, S308–L328, and F347–P367.

The protein belongs to the complex I subunit 1 family. As to quaternary structure, NDH-1 is composed of at least 11 different subunits.

The protein resides in the cellular thylakoid membrane. It carries out the reaction a plastoquinone + NADH + (n+1) H(+)(in) = a plastoquinol + NAD(+) + n H(+)(out). The enzyme catalyses a plastoquinone + NADPH + (n+1) H(+)(in) = a plastoquinol + NADP(+) + n H(+)(out). Functionally, NDH-1 shuttles electrons from an unknown electron donor, via FMN and iron-sulfur (Fe-S) centers, to quinones in the respiratory and/or the photosynthetic chain. The immediate electron acceptor for the enzyme in this species is believed to be plastoquinone. Couples the redox reaction to proton translocation, and thus conserves the redox energy in a proton gradient. The protein is NAD(P)H-quinone oxidoreductase subunit 1 of Prochlorococcus marinus (strain MIT 9301).